The chain runs to 174 residues: uncharacterized protein (174 aa).

Residues 7 to 24 traverse the membrane as a helical segment; that stretch reads LLLLAFAVCLAVGFSGCL.

It localises to the membrane. This is an uncharacterized protein from Methanocaldococcus jannaschii (strain ATCC 43067 / DSM 2661 / JAL-1 / JCM 10045 / NBRC 100440) (Methanococcus jannaschii).